The sequence spans 100 residues: Trp operon repressor homolog (100 aa).

Residues 59–82 mediate DNA binding; sequence QRQISQMLGVGIATITRGSNELKS. Over residues 78 to 93 the composition is skewed to basic and acidic residues; sequence NELKSKSDTDKDKLKT. A disordered region spans residues 78–100; it reads NELKSKSDTDKDKLKTLLEQGAQ.

It belongs to the TrpR family. As to quaternary structure, homodimer.

It localises to the cytoplasm. This protein is an aporepressor. When complexed with L-tryptophan it binds the operator region of the trp operon and prevents the initiation of transcription. This is Trp operon repressor homolog from Vibrio campbellii (strain ATCC BAA-1116).